A 161-amino-acid chain; its full sequence is Crossover junction endodeoxyribonuclease RuvC (161 aa).

Residues D7, E67, and D139 contribute to the active site. The Mg(2+) site is built by D7, E67, and D139.

This sequence belongs to the RuvC family. As to quaternary structure, homodimer which binds Holliday junction (HJ) DNA. The HJ becomes 2-fold symmetrical on binding to RuvC with unstacked arms; it has a different conformation from HJ DNA in complex with RuvA. In the full resolvosome a probable DNA-RuvA(4)-RuvB(12)-RuvC(2) complex forms which resolves the HJ. The cofactor is Mg(2+).

It localises to the cytoplasm. The catalysed reaction is Endonucleolytic cleavage at a junction such as a reciprocal single-stranded crossover between two homologous DNA duplexes (Holliday junction).. Functionally, the RuvA-RuvB-RuvC complex processes Holliday junction (HJ) DNA during genetic recombination and DNA repair. Endonuclease that resolves HJ intermediates. Cleaves cruciform DNA by making single-stranded nicks across the HJ at symmetrical positions within the homologous arms, yielding a 5'-phosphate and a 3'-hydroxyl group; requires a central core of homology in the junction. The consensus cleavage sequence is 5'-(A/T)TT(C/G)-3'. Cleavage occurs on the 3'-side of the TT dinucleotide at the point of strand exchange. HJ branch migration catalyzed by RuvA-RuvB allows RuvC to scan DNA until it finds its consensus sequence, where it cleaves and resolves the cruciform DNA. The sequence is that of Crossover junction endodeoxyribonuclease RuvC from Syntrophotalea carbinolica (strain DSM 2380 / NBRC 103641 / GraBd1) (Pelobacter carbinolicus).